A 227-amino-acid polypeptide reads, in one-letter code: Peroxiredoxin 1 (227 aa).

The 156-residue stretch at 6–161 folds into the Thioredoxin domain; the sequence is PLIGEKFPEM…ILRLIKSLQM (156 aa). The Cysteine sulfenic acid (-SOH) intermediate role is filled by cysteine 48. Arginine 124 is a binding site for substrate.

This sequence belongs to the peroxiredoxin family. Prx6 subfamily. In terms of assembly, homodecamer. Pentamer of dimers that assemble into a ring structure.

The protein localises to the cytoplasm. The catalysed reaction is a hydroperoxide + [thioredoxin]-dithiol = an alcohol + [thioredoxin]-disulfide + H2O. Its function is as follows. Thiol-specific peroxidase that catalyzes the reduction of hydrogen peroxide and organic hydroperoxides to water and alcohols, respectively. Plays a role in cell protection against oxidative stress by detoxifying peroxides. The polypeptide is Peroxiredoxin 1 (Picrophilus torridus (strain ATCC 700027 / DSM 9790 / JCM 10055 / NBRC 100828 / KAW 2/3)).